A 1170-amino-acid chain; its full sequence is Glucose transport transcription regulator RGT1 (1170 aa).

Residues 1–22 (MNELNTVSTNSSDSTKNGGTSN) show a composition bias toward polar residues. Positions 1 to 46 (MNELNTVSTNSSDSTKNGGTSNSPDDMDSAAAASHAIKKRTKASRA) are disordered. The segment at residues 47–76 (CDQCRKKKIKCDYKDEKGVCSNCQRNGDRC) is a DNA-binding region (zn(2)-C6 fungal-type). Residues 77–148 (SFDRVPLKRG…VPSTPSRSNS (72 aa)) are disordered. A compositionally biased stretch (basic and acidic residues) spans 99 to 108 (RTNEIQDHNN). A compositionally biased stretch (low complexity) spans 113 to 138 (NTFDNSNNTLNNNTGNSGDNGINSNT). Positions 139 to 148 (VPSTPSRSNS) are enriched in polar residues. 4 positions are modified to phosphoserine: Ser202, Ser205, Ser208, and Ser229. Positions 217–234 (PNEQLSYNTVQQSPITNK) are enriched in polar residues. Disordered stretches follow at residues 217–254 (PNEQ…SASG), 269–288 (APTD…IPSL), 293–343 (SNSL…PSIS), 384–506 (AQQT…HPMT), 725–757 (DEEA…NSPN), and 946–974 (RPPN…GNLN). A compositionally biased stretch (low complexity) spans 239-250 (SGNANGSVTGSG). A compositionally biased stretch (basic and acidic residues) spans 271–280 (TDDHNGEQTR). Ser283 and Ser284 each carry phosphoserine. Composition is skewed to low complexity over residues 293–302 (SNSLLLGGQP), 309–341 (QQSQ…YNPS), and 385–397 (QQTQ…QVPQ). Ser410 and Ser414 each carry phosphoserine. Polar residues predominate over residues 411-422 (APVSVTLSTDRL). Residues 424–444 (GNENNNGEINNNNGSNNSGSS) are compositionally biased toward low complexity. A compositionally biased stretch (polar residues) spans 445–457 (KDTSQHSQESVTT). Basic residues predominate over residues 473–488 (STKKRRKSYVSKKTKP). The span at 493-506 (SISITSKDSAHPMT) shows a compositional bias: polar residues. Residue Ser1130 is modified to Phosphoserine.

Belongs to the EDS1/RGT1 family. In terms of processing, glucose-induced phosphorylation regulates the DNA-binding activity. Hyperphosphorylation in cells growing on high levels of glucose does prevents DNA-binding and dephosphorylation restores DNA-binding ability.

It is found in the nucleus. Its subcellular location is the cytoplasm. In terms of biological role, glucose-responsive transcription factor that regulates expression of several glucose transporter (HXT) genes in response to glucose. In the absence of glucose, it functions as a transcriptional repressor, whereas high concentrations of glucose cause it to function as a transcriptional activator. In cells growing on low levels of glucose, has a neutral role, neither repressing nor activating transcription. Binds the consensus binding site sequence 5'-CGGANNA-3', of which multiple copies are present in all HXT promoters regulated by RGT1. In Saccharomyces cerevisiae (strain YJM789) (Baker's yeast), this protein is Glucose transport transcription regulator RGT1 (RGT1).